Consider the following 311-residue polypeptide: Immune-associated nucleotide-binding protein 7 (311 aa).

In terms of domain architecture, AIG1-type G spans 14 to 222 (KQAENIVLVG…YTDDTYHMIK (209 aa)). Positions 23–30 (GRTGNGKS) are G1. GTP contacts are provided by residues 23–31 (GRTGNGKSA) and serine 44. The interval 50–54 (GVTMK) is G2. Positions 72–75 (DTPG) are G3. The segment at 142–145 (TGGD) is G4. The tract at residues 181-183 (DNK) is G5. GTP is bound at residue asparagine 182. A coiled-coil region spans residues 218-295 (YHMIKEESEK…TQENNELNLA (78 aa)).

This sequence belongs to the TRAFAC class TrmE-Era-EngA-EngB-Septin-like GTPase superfamily. AIG1/Toc34/Toc159-like paraseptin GTPase family. IAN subfamily. As to expression, ubiquitous.

The polypeptide is Immune-associated nucleotide-binding protein 7 (Arabidopsis thaliana (Mouse-ear cress)).